Consider the following 86-residue polypeptide: Large ribosomal subunit protein bL27 (86 aa).

The interval methionine 1–lysine 24 is disordered.

Belongs to the bacterial ribosomal protein bL27 family.

This chain is Large ribosomal subunit protein bL27, found in Magnetococcus marinus (strain ATCC BAA-1437 / JCM 17883 / MC-1).